We begin with the raw amino-acid sequence, 320 residues long: Putative malonate transporter (320 aa).

8 helical membrane-spanning segments follow: residues 1-21, 32-52, 65-85, 113-133, 167-187, 196-216, 256-276, and 289-309; these read MAEI…GYLT, MGWL…FKLV, FILT…AIGL, GLAL…IFCF, IAFH…FLSF, LIDY…GVTL, IWVQ…VFVI, and ATIL…LYLI.

This sequence belongs to the auxin efflux carrier (TC 2.A.69) family.

The protein localises to the cell membrane. This chain is Putative malonate transporter (mdcF), found in Rhizobium meliloti (strain 1021) (Ensifer meliloti).